Consider the following 596-residue polypeptide: Malto-oligosyltrehalose trehalohydrolase (596 aa).

A substrate-binding site is contributed by 263–268; sequence RLDAVH. D265 functions as the Nucleophile in the catalytic mechanism. Residue E302 is the Proton donor of the active site. Substrate contacts are provided by residues 327-331 and 397-402; these read DDFHH and HDQIGN.

This sequence belongs to the glycosyl hydrolase 13 family.

The protein resides in the cytoplasm. The catalysed reaction is hydrolysis of (1-&gt;4)-alpha-D-glucosidic linkage in 4-alpha-D-[(1-&gt;4)-alpha-D-glucanosyl]n trehalose to yield trehalose and (1-&gt;4)-alpha-D-glucan.. Its pathway is glycan biosynthesis; trehalose biosynthesis. This chain is Malto-oligosyltrehalose trehalohydrolase (treZ), found in Rhizobium sp. (strain M-11).